The sequence spans 122 residues: Protein TCL1B3 (122 aa).

It belongs to the TCL1 family.

This Mus musculus (Mouse) protein is Protein TCL1B3 (Tcl1b3).